A 608-amino-acid polypeptide reads, in one-letter code: Isoprene synthase, chloroplastic (608 aa).

A chloroplast-targeting transit peptide spans 1 to 45 (MATNLLCLSNKLSSPTPTPSTRFPQSKNFITQKTSLANPKPWRVI). D350 provides a ligand contact to dimethylallyl diphosphate. Mg(2+) contacts are provided by D350 and D354. A DDXXD motif motif is present at residues 350 to 354 (DDVYD). Positions 428, 494, and 497 each coordinate dimethylallyl diphosphate. 3 residues coordinate Mg(2+): N497, T501, and E505.

It belongs to the terpene synthase family. Tpsb subfamily. It depends on Mg(2+) as a cofactor. Requires Mn(2+) as cofactor.

The protein resides in the plastid. It localises to the chloroplast. The enzyme catalyses dimethylallyl diphosphate = isoprene + diphosphate. Lyase that catalyzes the formation of isoprene from dimethylallyl diphosphate. The protein is Isoprene synthase, chloroplastic (ISPS) of Pueraria montana var. lobata (Kudzu vine).